Here is a 673-residue protein sequence, read N- to C-terminus: tRNA uridine 5-carboxymethylaminomethyl modification enzyme MnmG (673 aa).

17–22 serves as a coordination point for FAD; sequence GGGHAG. Residue 284-298 participates in NAD(+) binding; sequence GPRYCPSVEDKINRF.

Belongs to the MnmG family. As to quaternary structure, homodimer. Heterotetramer of two MnmE and two MnmG subunits. FAD serves as cofactor.

It localises to the cytoplasm. In terms of biological role, NAD-binding protein involved in the addition of a carboxymethylaminomethyl (cmnm) group at the wobble position (U34) of certain tRNAs, forming tRNA-cmnm(5)s(2)U34. This Polaromonas sp. (strain JS666 / ATCC BAA-500) protein is tRNA uridine 5-carboxymethylaminomethyl modification enzyme MnmG.